Consider the following 906-residue polypeptide: Cadherin-2 (906 aa).

Positions 1 to 25 (MCRIVGAPRTLLPLLAALLQASVDA) are cleaved as a signal peptide. Residues 26–159 (SGEISLCKTG…HNGYLQRQKR (134 aa)) constitute a propeptide that is removed on maturation. Phosphoserine is present on residues serine 96 and serine 135. Cadherin domains are found at residues 160–267 (DWVI…RPEF), 268–392 (LHQV…GEVP), 393–497 (ENRV…NPYF), 498–603 (APNP…DNAP), and 604–714 (QVLP…DVDR). The Extracellular segment spans residues 160 to 724 (DWVIPPINLP…IVGAGLGTGA (565 aa)). Glutamate 170 provides a ligand contact to Ca(2+). N-linked (GlcNAc...) asparagine glycosylation occurs at asparagine 190. 7 residues coordinate Ca(2+): aspartate 226, glutamate 228, aspartate 259, methionine 260, asparagine 261, aspartate 262, and asparagine 263. N-linked (GlcNAc...) asparagine glycosylation is present at asparagine 273. The Ca(2+) site is built by aspartate 293, aspartate 295, and asparagine 301. Asparagine 325 carries an N-linked (GlcNAc...) asparagine glycan. A Ca(2+)-binding site is contributed by aspartate 353. 6 N-linked (GlcNAc...) asparagine glycosylation sites follow: asparagine 357, asparagine 402, asparagine 572, asparagine 622, asparagine 651, and asparagine 692. The helical transmembrane segment at 725–746 (IIAILLCIIILLILVLMFVVWM) threads the bilayer. Over 747-906 (KRRDKERQAK…LADMYGGGDD (160 aa)) the chain is Cytoplasmic. Residues 863–880 (SGSTAGSLSSLNSSSSGG) show a composition bias toward low complexity. The interval 863 to 884 (SGSTAGSLSSLNSSSSGGEQDY) is disordered.

Homodimer (via extracellular region). Can also form heterodimers with other cadherins (via extracellular region). Dimerization occurs in trans, i.e. with a cadherin chain from another cell. Interacts with CDCP1. Interacts with PCDH8; this complex may also include TAOK2. The interaction with PCDH8 may lead to internalization through TAOK2/p38 MAPK pathway. Identified in a complex containing FGFR4, NCAM1, CDH2, PLCG1, FRS2, SRC, SHC1, GAP43 and CTTN. May interact with OBSCN (via protein kinase domain 2). Interacts with FBXO45. Post-translationally, cleaved by MMP24. Ectodomain cleavage leads to the generation of a soluble 90 kDa N-terminal soluble fragment and a 45 kDa membrane-bound C-terminal fragment 1 (CTF1), which is further cleaved by gamma-secretase into a 35 kDa. Cleavage in neural stem cells by MMP24 affects CDH2-mediated anchorage of neural stem cells to ependymocytes in the adult subependymal zone, leading to modulate neural stem cell quiescence. In terms of processing, may be phosphorylated by OBSCN. As to expression, detected in liver, kidney, heart and brain capillaries.

The protein localises to the cell membrane. It is found in the sarcolemma. The protein resides in the cell junction. Its subcellular location is the cell surface. It localises to the desmosome. The protein localises to the adherens junction. Calcium-dependent cell adhesion protein; preferentially mediates homotypic cell-cell adhesion by dimerization with a CDH2 chain from another cell. Cadherins may thus contribute to the sorting of heterogeneous cell types. Acts as a regulator of neural stem cells quiescence by mediating anchorage of neural stem cells to ependymocytes in the adult subependymal zone: upon cleavage by MMP24, CDH2-mediated anchorage is affected, leading to modulate neural stem cell quiescence. Plays a role in cell-to-cell junction formation between pancreatic beta cells and neural crest stem (NCS) cells, promoting the formation of processes by NCS cells. Required for proper neurite branching. Required for pre- and postsynaptic organization. CDH2 may be involved in neuronal recognition mechanism. In hippocampal neurons, may regulate dendritic spine density. This is Cadherin-2 (CDH2) from Bos taurus (Bovine).